We begin with the raw amino-acid sequence, 1235 residues long: Ubiquitin carboxyl-terminal hydrolase 40 (1235 aa).

Positions 41 to 482 constitute a USP domain; sequence SGIRNQGGTC…SAYMLFYRKS (442 aa). Cys50 (nucleophile) is an active-site residue. The Proton acceptor role is filled by His305. The segment covering 1180-1190 has biased composition (basic and acidic residues); that stretch reads IRDDTGKEKQK. The interval 1180–1235 is disordered; sequence IRDDTGKEKQKQRALGRRKSQEALHEQSSYILSSAETPARPRAPETSLSIHVGSFR. Residues 1205-1215 show a composition bias toward polar residues; that stretch reads EQSSYILSSAE.

Belongs to the peptidase C19 family. In terms of tissue distribution, broadly expressed.

It carries out the reaction Thiol-dependent hydrolysis of ester, thioester, amide, peptide and isopeptide bonds formed by the C-terminal Gly of ubiquitin (a 76-residue protein attached to proteins as an intracellular targeting signal).. May be catalytically inactive. This Homo sapiens (Human) protein is Ubiquitin carboxyl-terminal hydrolase 40 (USP40).